The sequence spans 649 residues: DNA mismatch repair protein MutL (649 aa).

This sequence belongs to the DNA mismatch repair MutL/HexB family.

This protein is involved in the repair of mismatches in DNA. It is required for dam-dependent methyl-directed DNA mismatch repair. May act as a 'molecular matchmaker', a protein that promotes the formation of a stable complex between two or more DNA-binding proteins in an ATP-dependent manner without itself being part of a final effector complex. The polypeptide is DNA mismatch repair protein MutL (Streptococcus pneumoniae (strain P1031)).